We begin with the raw amino-acid sequence, 267 residues long: Kit ligand (267 aa).

The signal sequence occupies residues 1-25 (MKKTQTWIITCIYLQLLLFNPLVHT). A Pyrrolidone carboxylic acid modification is found at glutamine 26. At 26 to 215 (QGICRNRVTD…SNSIEDSSLQ (190 aa)) the chain is on the extracellular side. 2 disulfide bridges follow: cysteine 29/cysteine 114 and cysteine 68/cysteine 164. N-linked (GlcNAc...) asparagine glycans are attached at residues asparagine 90, asparagine 97, asparagine 145, and asparagine 196. Residues 216–238 (WAAVALPAFFSLVIGFAFGALYW) traverse the membrane as a helical segment. Topologically, residues 239 to 267 (KKKQPNLTRTVENRQINEEDNEISMLQEK) are cytoplasmic.

Belongs to the SCF family. In terms of assembly, homodimer, non-covalently linked. Heterotetramer with KIT, binding two KIT molecules; thereby mediates KIT dimerization and subsequent activation by autophosphorylation. A soluble form is produced by proteolytic processing of the extracellular domain.

The protein localises to the cytoplasm. The protein resides in the cytoskeleton. Its subcellular location is the cell membrane. It is found in the cell projection. It localises to the lamellipodium. The protein localises to the filopodium. The protein resides in the secreted. In terms of biological role, ligand for the receptor-type protein-tyrosine kinase KIT. Plays an essential role in the regulation of cell survival and proliferation, hematopoiesis, stem cell maintenance, gametogenesis, mast cell development, migration and function, and in melanogenesis. KITLG/SCF binding can activate several signaling pathways. Promotes phosphorylation of PIK3R1, the regulatory subunit of phosphatidylinositol 3-kinase, and subsequent activation of the kinase AKT1. KITLG/SCF and KIT also transmit signals via GRB2 and activation of RAS, RAF1 and the MAP kinases MAPK1/ERK2 and/or MAPK3/ERK1. KITLG/SCF and KIT promote activation of STAT family members STAT1, STAT3 and STAT5. KITLG/SCF and KIT promote activation of PLCG1, leading to the production of the cellular signaling molecules diacylglycerol and inositol 1,4,5-trisphosphate. KITLG/SCF acts synergistically with other cytokines, probably interleukins. This is Kit ligand (KITLG) from Ovis aries (Sheep).